We begin with the raw amino-acid sequence, 220 residues long: NADH-quinone oxidoreductase subunit B (220 aa).

[4Fe-4S] cluster is bound by residues Cys37, Cys38, Cys103, and Cys132. The interval 174–220 is disordered; the sequence is PSSERYAPKNRSQRKLAERQQAAQRREMGAEKPLGALEERAELNAGR. A compositionally biased stretch (basic and acidic residues) spans 210–220; that stretch reads LEERAELNAGR.

This sequence belongs to the complex I 20 kDa subunit family. NDH-1 is composed of 14 different subunits. Subunits NuoB, C, D, E, F, and G constitute the peripheral sector of the complex. [4Fe-4S] cluster serves as cofactor.

The protein localises to the cell membrane. It catalyses the reaction a quinone + NADH + 5 H(+)(in) = a quinol + NAD(+) + 4 H(+)(out). NDH-1 shuttles electrons from NADH, via FMN and iron-sulfur (Fe-S) centers, to quinones in the respiratory chain. The immediate electron acceptor for the enzyme in this species is believed to be a menaquinone. Couples the redox reaction to proton translocation (for every two electrons transferred, four hydrogen ions are translocated across the cytoplasmic membrane), and thus conserves the redox energy in a proton gradient. The sequence is that of NADH-quinone oxidoreductase subunit B from Saccharopolyspora erythraea (strain ATCC 11635 / DSM 40517 / JCM 4748 / NBRC 13426 / NCIMB 8594 / NRRL 2338).